Reading from the N-terminus, the 331-residue chain is Ketol-acid reductoisomerase (NADP(+)) (331 aa).

The KARI N-terminal Rossmann domain occupies 2–182 (ARLYYDADAN…GGTRAGILET (181 aa)). NADP(+) contacts are provided by residues 25–28 (YGSQ), serine 51, serine 53, and 83–86 (DEVQ). Residue histidine 108 is part of the active site. Residue glycine 134 participates in NADP(+) binding. Residues 183 to 328 (TFREETETDL…KDLRAMFSWT (146 aa)) form the KARI C-terminal knotted domain. The Mg(2+) site is built by aspartate 191, glutamate 195, glutamate 227, and glutamate 231. Residue serine 252 participates in substrate binding.

This sequence belongs to the ketol-acid reductoisomerase family. Mg(2+) serves as cofactor.

The enzyme catalyses (2R)-2,3-dihydroxy-3-methylbutanoate + NADP(+) = (2S)-2-acetolactate + NADPH + H(+). It catalyses the reaction (2R,3R)-2,3-dihydroxy-3-methylpentanoate + NADP(+) = (S)-2-ethyl-2-hydroxy-3-oxobutanoate + NADPH + H(+). It participates in amino-acid biosynthesis; L-isoleucine biosynthesis; L-isoleucine from 2-oxobutanoate: step 2/4. The protein operates within amino-acid biosynthesis; L-valine biosynthesis; L-valine from pyruvate: step 2/4. Its function is as follows. Involved in the biosynthesis of branched-chain amino acids (BCAA). Catalyzes an alkyl-migration followed by a ketol-acid reduction of (S)-2-acetolactate (S2AL) to yield (R)-2,3-dihydroxy-isovalerate. In the isomerase reaction, S2AL is rearranged via a Mg-dependent methyl migration to produce 3-hydroxy-3-methyl-2-ketobutyrate (HMKB). In the reductase reaction, this 2-ketoacid undergoes a metal-dependent reduction by NADPH to yield (R)-2,3-dihydroxy-isovalerate. In Acaryochloris marina (strain MBIC 11017), this protein is Ketol-acid reductoisomerase (NADP(+)).